The chain runs to 598 residues: Kinesin-like protein klp-3 (598 aa).

Coiled coils occupy residues 19 to 66 (EVEL…FIQG) and 89 to 118 (GNLS…LETD). The tract at residues 133 to 155 (ALSRDSSCSVPRSVSPQPTGDVI) is disordered. Residues 136–150 (RDSSCSVPRSVSPQP) are compositionally biased toward polar residues. Residues 170–248 (HWKKLQRCAE…LVELNGNIRV (79 aa)) adopt a coiled-coil conformation. The region spanning 245-565 (NIRVFYRIRP…VNFAEKIGQV (321 aa)) is the Kinesin motor domain. 328 to 335 (GHTGSGKT) contacts ATP. The segment at 569-598 (SGTMKREPTRRSMTGISSGQRREIPASPRK) is disordered.

Belongs to the TRAFAC class myosin-kinesin ATPase superfamily. Kinesin family.

It localises to the cytoplasm. Its subcellular location is the cytoskeleton. The polypeptide is Kinesin-like protein klp-3 (klp-3) (Caenorhabditis elegans).